The sequence spans 429 residues: O-methyltransferase phnC (429 aa).

Position 285 (aspartate 285) interacts with S-adenosyl-L-methionine.

The protein belongs to the class I-like SAM-binding methyltransferase superfamily. Cation-independent O-methyltransferase family. COMT subfamily.

It carries out the reaction (2'R)-atrovenetin + S-adenosyl-L-methionine = deoxyherqueinone + S-adenosyl-L-homocysteine + H(+). Its pathway is secondary metabolite biosynthesis. Its function is as follows. O-methyltransferase; part of the gene cluster that mediates the biosynthesis of phenalenones such as herqueinone, compounds that have been reported to treat tumors, bacterial infections and/or mycoses, and rheumatic diseases. The non-reducing polyketide synthase phnA synthesizes the heptaketide backbone and cyclizes it into the angular, hemiketal-containing naphtho-gamma-pyrone prephenalenone. The product template (PT) domain of phnA catalyzes only the C4-C9 aldol condensation, which is unprecedented among known PT domains. The transformation of prephenalenone to phenalenones requires an FAD-dependent monooxygenase phnB, which catalyzes the C2 aromatic hydroxylation of prephenalenone and ring opening of the gamma-pyrone ring simultaneously. Subsequent intramolecular deprotonation of C3 phenolic oxygen accelerates phenalenone ring closure to yield the tricyclic phenalenone core with a C2 hydroxylation. The prenyltransferase phnF further catalyzes reverse C-prenylation of phenalenone by direct electrophilic substitution at C6, or possibly via first a forward O-prenylation of a neighboring phenol in phenalenone, followed by a Claisen rearrangement. The hydroalkoxylation enzyme phnH catalyzes the 5-exo-trig cyclization via acid catalysis after the spontaneous deprotonation of 7-OH, which leads to the formation of the dihydrobenzofuran atrovenetin. Atrovenetin is further converted to deoxyherqueinone by the O-methyltransferase phnC which can methylate C2-OH to stabilize the northern portion of the phenalenone core. Finally, the oxidoreductase phnG converts deoxyherqueinone to herqueinone via C6 hydroxylation. This is O-methyltransferase phnC from Penicillium herquei.